Here is a 209-residue protein sequence, read N- to C-terminus: MADS-box transcription factor 2 (209 aa).

Residues 1 to 61 form the MADS-box domain; sequence MGRGKIEIKR…GKLYDYCSPK (61 aa). In terms of domain architecture, K-box spans 84-170; that stretch reads HKSLSAEIDR…AFKLHQQDIA (87 aa).

In terms of tissue distribution, highly expressed in anthers and carpels. Expressed in pollen, tapetum and stigma.

The protein localises to the nucleus. Probable transcription factor involved in the development of floral organs. B-class protein required for normal development of lodicules (whorl 2). This Oryza sativa subsp. japonica (Rice) protein is MADS-box transcription factor 2 (MADS2).